Consider the following 282-residue polypeptide: Phosphoglucan phosphatase LSF2, chloroplastic (282 aa).

The N-terminal 61 residues, 1 to 61, are a transit peptide targeting the chloroplast; it reads MSVIGSKSCI…GENPGTNGVS (61 aa). Residues tyrosine 83, 153–156, aspartate 161, and 177–180 each bind substrate; these read RHMR and SLEW. The region spanning 92–249 is the Tyrosine-protein phosphatase domain; the sequence is NYTLIRDELI…TYDLAKNDPW (158 aa). The active-site Phosphocysteine intermediate is the cysteine 193. The Glucan phosphatase signature motif CXAGXGR signature appears at 193 to 199; sequence CSAGLGR. Residues 194 to 199, glycine 230, lysine 245, glutamate 251, 259 to 263, and glutamate 268 contribute to the substrate site; these read SAGLGR and NAFED.

Widely expressed.

It is found in the plastid. The protein localises to the chloroplast. In terms of biological role, starch-associated phosphoglucan phosphatase that selectively dephosphorylates the glucan C3 position. Probably participates in the regulation of starch degradation. This chain is Phosphoglucan phosphatase LSF2, chloroplastic (LSF2), found in Arabidopsis thaliana (Mouse-ear cress).